The sequence spans 250 residues: Probable transcriptional regulatory protein SCO1521 (250 aa).

It belongs to the TACO1 family.

The protein resides in the cytoplasm. This is Probable transcriptional regulatory protein SCO1521 from Streptomyces coelicolor (strain ATCC BAA-471 / A3(2) / M145).